Here is a 550-residue protein sequence, read N- to C-terminus: Hydroxylamine reductase (550 aa).

Cys3, Cys6, Cys18, and Cys25 together coordinate [2Fe-2S] cluster. Hybrid [4Fe-2O-2S] cluster is bound by residues His249, Glu273, Cys317, Cys405, Cys433, Cys458, Glu492, and Lys494. The residue at position 405 (Cys405) is a Cysteine persulfide.

It belongs to the HCP family. Requires [2Fe-2S] cluster as cofactor. It depends on hybrid [4Fe-2O-2S] cluster as a cofactor.

Its subcellular location is the cytoplasm. The enzyme catalyses A + NH4(+) + H2O = hydroxylamine + AH2 + H(+). Its function is as follows. Catalyzes the reduction of hydroxylamine to form NH(3) and H(2)O. The chain is Hydroxylamine reductase from Escherichia coli O6:K15:H31 (strain 536 / UPEC).